The chain runs to 255 residues: Thiazole synthase (255 aa).

Residue lysine 96 is the Schiff-base intermediate with DXP of the active site. Residues glycine 157, 183–184 (AG), and 205–206 (NT) contribute to the 1-deoxy-D-xylulose 5-phosphate site.

Belongs to the ThiG family. In terms of assembly, homotetramer. Forms heterodimers with either ThiH or ThiS.

Its subcellular location is the cytoplasm. The enzyme catalyses [ThiS sulfur-carrier protein]-C-terminal-Gly-aminoethanethioate + 2-iminoacetate + 1-deoxy-D-xylulose 5-phosphate = [ThiS sulfur-carrier protein]-C-terminal Gly-Gly + 2-[(2R,5Z)-2-carboxy-4-methylthiazol-5(2H)-ylidene]ethyl phosphate + 2 H2O + H(+). It participates in cofactor biosynthesis; thiamine diphosphate biosynthesis. Catalyzes the rearrangement of 1-deoxy-D-xylulose 5-phosphate (DXP) to produce the thiazole phosphate moiety of thiamine. Sulfur is provided by the thiocarboxylate moiety of the carrier protein ThiS. In vitro, sulfur can be provided by H(2)S. This is Thiazole synthase from Bacillus pumilus (strain SAFR-032).